Reading from the N-terminus, the 350-residue chain is Glycerol-1-phosphate dehydrogenase [NAD(P)+] (350 aa).

Residues 97–101 (GSIID) and 119–122 (TTAS) each bind NAD(+). D124 provides a ligand contact to substrate. S128 is an NAD(+) binding site. D171 is a binding site for substrate. Zn(2+) is bound by residues D171 and H251. H255 provides a ligand contact to substrate. Residue H267 participates in Zn(2+) binding.

Belongs to the glycerol-1-phosphate dehydrogenase family. It depends on Zn(2+) as a cofactor.

It is found in the cytoplasm. It catalyses the reaction sn-glycerol 1-phosphate + NAD(+) = dihydroxyacetone phosphate + NADH + H(+). The enzyme catalyses sn-glycerol 1-phosphate + NADP(+) = dihydroxyacetone phosphate + NADPH + H(+). It functions in the pathway membrane lipid metabolism; glycerophospholipid metabolism. Catalyzes the NAD(P)H-dependent reduction of dihydroxyacetonephosphate (DHAP or glycerone phosphate) to glycerol 1-phosphate (G1P). The G1P thus generated is used as the glycerophosphate backbone of phospholipids in the cellular membranes of Archaea. This Thermococcus sibiricus (strain DSM 12597 / MM 739) protein is Glycerol-1-phosphate dehydrogenase [NAD(P)+].